A 115-amino-acid chain; its full sequence is Large ribosomal subunit protein bL20 (115 aa).

It belongs to the bacterial ribosomal protein bL20 family.

In terms of biological role, binds directly to 23S ribosomal RNA and is necessary for the in vitro assembly process of the 50S ribosomal subunit. It is not involved in the protein synthesizing functions of that subunit. This Synechococcus sp. (strain RCC307) protein is Large ribosomal subunit protein bL20.